The sequence spans 111 residues: uncharacterized protein (111 aa).

The stretch at 4–51 (LGQVKVLEEKVAKAVHLVQMLKEENAALRAEIDGRGKRITELEQLVLX) forms a coiled coil.

This is an uncharacterized protein from Treponema pallidum (strain Nichols).